Consider the following 151-residue polypeptide: Flavodoxin YqcA (151 aa).

The Flavodoxin-like domain maps to 4 to 145 (IGIFVGTVYG…ISCPWVEAWA (142 aa)). Residues 10 to 15 (TVYGNA) and 99 to 101 (NFC) each bind FMN.

Belongs to the flavodoxin family. MioC subfamily. As to quaternary structure, monomer. Requires FMN as cofactor.

In terms of biological role, probable electron transporter. In Pectobacterium carotovorum subsp. carotovorum (Erwinia carotovora subsp. carotovora), this protein is Flavodoxin YqcA.